Here is a 236-residue protein sequence, read N- to C-terminus: Small ribosomal subunit protein uS3 (236 aa).

A KH type-2 domain is found at 39 to 107 (IRKFLKKELY…EISINIKEVK (69 aa)). The span at 213-229 (QPEKKEEAPARDKEGRG) shows a compositional bias: basic and acidic residues. Residues 213-236 (QPEKKEEAPARDKEGRGTRRRGRQ) are disordered.

It belongs to the universal ribosomal protein uS3 family. Part of the 30S ribosomal subunit. Forms a tight complex with proteins S10 and S14.

Functionally, binds the lower part of the 30S subunit head. Binds mRNA in the 70S ribosome, positioning it for translation. The protein is Small ribosomal subunit protein uS3 of Wolinella succinogenes (strain ATCC 29543 / DSM 1740 / CCUG 13145 / JCM 31913 / LMG 7466 / NCTC 11488 / FDC 602W) (Vibrio succinogenes).